Consider the following 119-residue polypeptide: Protein YdaY (119 aa).

The polypeptide is Protein YdaY (ydaY) (Escherichia coli (strain K12)).